The following is a 1183-amino-acid chain: Putative ATP-dependent RNA helicase PB1A10.06c (1183 aa).

Disordered stretches follow at residues 1–92 and 165–315; these read MGRL…KKRL and ETTT…RASR. Over residues 60 to 81 the composition is skewed to basic and acidic residues; the sequence is VPKEERQKRKQELKDQLLKENE. 2 stretches are compositionally biased toward low complexity: residues 165-176 and 184-196; these read ETTTTKSSTAET and TRSG…STGT. Acidic residues predominate over residues 224–251; it reads EDPEYDSAEEDYLSTDSEEFSEDSDNSS. Over residues 252–270 the composition is skewed to basic and acidic residues; sequence EENKDTNEPSTKDAEKTVP. Residues 292–308 show a composition bias toward acidic residues; the sequence is ENEDFDLETSEDDSSDD. The Helicase ATP-binding domain maps to 408 to 585; the sequence is MEQIFANDVV…KLLFSVPPPI (178 aa). 421-428 lines the ATP pocket; the sequence is GATGSGKT. The DEAH box signature appears at 522–525; the sequence is DEAH. The region spanning 611–831 is the Helicase C-terminal domain; it reads AFDKVCLIHK…SIVLQMKNMN (221 aa). Residues 673–683 are compositionally biased toward acidic residues; the sequence is EDLQSETEDID. Positions 673-696 are disordered; sequence EDLQSETEDIDQVPTSSSSSVTYD.

The protein belongs to the DEAD box helicase family. DEAH subfamily.

It is found in the nucleus. Its subcellular location is the nucleolus. It carries out the reaction ATP + H2O = ADP + phosphate + H(+). The protein is Putative ATP-dependent RNA helicase PB1A10.06c of Schizosaccharomyces pombe (strain 972 / ATCC 24843) (Fission yeast).